The following is a 311-amino-acid chain: tRNA dimethylallyltransferase (311 aa).

Position 16–23 (G16–S23) interacts with ATP. T18–S23 contacts substrate. Residues D41–Q44 are interaction with substrate tRNA.

The protein belongs to the IPP transferase family. In terms of assembly, monomer. Requires Mg(2+) as cofactor.

It catalyses the reaction adenosine(37) in tRNA + dimethylallyl diphosphate = N(6)-dimethylallyladenosine(37) in tRNA + diphosphate. In terms of biological role, catalyzes the transfer of a dimethylallyl group onto the adenine at position 37 in tRNAs that read codons beginning with uridine, leading to the formation of N6-(dimethylallyl)adenosine (i(6)A). In Geobacter sulfurreducens (strain ATCC 51573 / DSM 12127 / PCA), this protein is tRNA dimethylallyltransferase.